Consider the following 1401-residue polypeptide: DNA-directed RNA polymerase subunit beta' (1401 aa).

The Zn(2+) site is built by Cys70, Cys72, Cys85, and Cys88. Asp460, Asp462, and Asp464 together coordinate Mg(2+). Positions 808, 882, 889, and 892 each coordinate Zn(2+).

The protein belongs to the RNA polymerase beta' chain family. As to quaternary structure, the RNAP catalytic core consists of 2 alpha, 1 beta, 1 beta' and 1 omega subunit. When a sigma factor is associated with the core the holoenzyme is formed, which can initiate transcription. The cofactor is Mg(2+). Requires Zn(2+) as cofactor.

It carries out the reaction RNA(n) + a ribonucleoside 5'-triphosphate = RNA(n+1) + diphosphate. In terms of biological role, DNA-dependent RNA polymerase catalyzes the transcription of DNA into RNA using the four ribonucleoside triphosphates as substrates. This is DNA-directed RNA polymerase subunit beta' from Legionella pneumophila subsp. pneumophila (strain Philadelphia 1 / ATCC 33152 / DSM 7513).